Reading from the N-terminus, the 138-residue chain is Cysteine desulfuration protein SufE (138 aa).

Cys-51 functions as the Cysteine persulfide intermediate in the catalytic mechanism.

Belongs to the SufE family. Homodimer. Interacts with SufS.

Its subcellular location is the cytoplasm. Its pathway is cofactor biosynthesis; iron-sulfur cluster biosynthesis. Its function is as follows. Participates in cysteine desulfuration mediated by SufS. Cysteine desulfuration mobilizes sulfur from L-cysteine to yield L-alanine and constitutes an essential step in sulfur metabolism for biosynthesis of a variety of sulfur-containing biomolecules. Functions as a sulfur acceptor for SufS, by mediating the direct transfer of the sulfur atom from the S-sulfanylcysteine of SufS, an intermediate product of cysteine desulfuration process. The polypeptide is Cysteine desulfuration protein SufE (Klebsiella pneumoniae subsp. pneumoniae (strain ATCC 700721 / MGH 78578)).